The following is a 251-amino-acid chain: uncharacterized protein (251 aa).

The next 5 membrane-spanning stretches (helical) occupy residues 22 to 42 (FLGV…DIVI), 86 to 106 (FFLS…VILA), 120 to 140 (LASS…AGIV), 157 to 177 (LGYF…IPYV), and 205 to 225 (IVAW…SFLA).

The protein resides in the cell membrane. This is an uncharacterized protein from Mycoplasma pneumoniae (strain ATCC 29342 / M129 / Subtype 1) (Mycoplasmoides pneumoniae).